The chain runs to 122 residues: Large ribosomal subunit protein bL12 (122 aa).

This sequence belongs to the bacterial ribosomal protein bL12 family. In terms of assembly, homodimer. Part of the ribosomal stalk of the 50S ribosomal subunit. Forms a multimeric L10(L12)X complex, where L10 forms an elongated spine to which 2 to 4 L12 dimers bind in a sequential fashion. Binds GTP-bound translation factors.

Its function is as follows. Forms part of the ribosomal stalk which helps the ribosome interact with GTP-bound translation factors. Is thus essential for accurate translation. This Cellvibrio japonicus (strain Ueda107) (Pseudomonas fluorescens subsp. cellulosa) protein is Large ribosomal subunit protein bL12.